A 502-amino-acid chain; its full sequence is Mannitol 2-dehydrogenase (502 aa).

37–48 is a binding site for NAD(+); sequence IVHVGVGGFHRA.

The protein belongs to the mannitol dehydrogenase family. In terms of assembly, monomer.

The enzyme catalyses D-mannitol + NAD(+) = D-fructose + NADH + H(+). In terms of biological role, catalyzes the NAD(H)-dependent interconversion of D-fructose and D-mannitol in the mannitol metabolic pathway. The protein is Mannitol 2-dehydrogenase of Aspergillus terreus (strain NIH 2624 / FGSC A1156).